A 985-amino-acid chain; its full sequence is Lateral signaling target protein 2 homolog (985 aa).

Disordered regions lie at residues 310 to 453 (PLGS…ETDE), 498 to 520 (EYGA…PSTS), 533 to 640 (LRLP…SSLS), and 747 to 892 (DNVF…TTTA). Composition is skewed to low complexity over residues 327–348 (HPTT…TNTH), 384–393 (SLSPNSTPTA), and 401–422 (PSHS…PADW). The span at 423–453 (SDGDDEDEEDDDDDIEVEEEELDSTDDETDE) shows a compositional bias: acidic residues. Phosphoserine is present on residues S537 and S538. Basic residues-rich tracts occupy residues 563-589 (VYRH…HHQH) and 596-607 (HPHRTTRSGRKR). Low complexity-rich tracts occupy residues 629-640 (ASGDTSAASSLS) and 761-770 (NGNQANASAQ). Residues 776–785 (GSIQRNNTVD) are compositionally biased toward polar residues. Phosphoserine is present on S808. The span at 812–866 (QESASTSTSSSQLHQEQQQLQIQVQRQRNNSVGSNTPSSASSTSSSSEQNSPVSA) shows a compositional bias: low complexity. Residues 875–885 (QSNNETQMPSS) show a composition bias toward polar residues. The segment at 904 to 964 (DGKAPRCMSC…VCRECYVREV (61 aa)) adopts an FYVE-type zinc-finger fold. C910, C913, C926, C929, C934, C937, C956, and C959 together coordinate Zn(2+).

It belongs to the lst-2 family.

In terms of biological role, negative regulator of epidermal growth factor receptor (EGFR) signaling. The chain is Lateral signaling target protein 2 homolog from Drosophila ananassae (Fruit fly).